The chain runs to 122 residues: Large ribosomal subunit protein bL20c (122 aa).

Belongs to the bacterial ribosomal protein bL20 family.

It localises to the plastid. Its subcellular location is the chloroplast. Binds directly to 23S ribosomal RNA and is necessary for the in vitro assembly process of the 50S ribosomal subunit. It is not involved in the protein synthesizing functions of that subunit. The chain is Large ribosomal subunit protein bL20c from Dioscorea elephantipes (Elephant's foot yam).